A 313-amino-acid chain; its full sequence is GTP cyclohydrolase MptA (313 aa).

This sequence belongs to the GTP cyclohydrolase IV family. Homodimer. Fe(2+) is required as a cofactor.

The catalysed reaction is GTP + H2O = 7,8-dihydroneopterin 2',3'-cyclic phosphate + formate + diphosphate + H(+). It functions in the pathway cofactor biosynthesis; 5,6,7,8-tetrahydromethanopterin biosynthesis. Its function is as follows. Converts GTP to 7,8-dihydro-D-neopterin 2',3'-cyclic phosphate, the first intermediate in the biosynthesis of coenzyme methanopterin. The protein is GTP cyclohydrolase MptA of Methanoculleus marisnigri (strain ATCC 35101 / DSM 1498 / JR1).